The sequence spans 201 residues: MSRYRGPRFKKIRRLGALPGLTNKRPRTVRDLRNQSRSGKKSHYRIRLEEKQKLRFHYGLTERQLISYVRIARKAKGSTGEVLIQLLEMRLDNILFRLGMAYTIPAARQLVNHRHILVNGHIVDIPSYRCKPRDIITSKDKPKSGALIKNSIKAFPREELPNHLTLHPAPYKGLINQIIDTKWVGLKINELLVVEYYSRQT.

Residues 89 to 149 (MRLDNILFRL…DKPKSGALIK (61 aa)) enclose the S4 RNA-binding domain.

Belongs to the universal ribosomal protein uS4 family. In terms of assembly, part of the 30S ribosomal subunit. Contacts protein S5. The interaction surface between S4 and S5 is involved in control of translational fidelity.

It is found in the plastid. Its function is as follows. One of the primary rRNA binding proteins, it binds directly to 16S rRNA where it nucleates assembly of the body of the 30S subunit. With S5 and S12 plays an important role in translational accuracy. This chain is Small ribosomal subunit protein uS4c (rps4), found in Cuscuta reflexa (Southern Asian dodder).